The sequence spans 202 residues: Mevalonate-3-phosphate 5-kinase (202 aa).

It catalyses the reaction (R)-3-phosphomevalonate + ATP = (R)-3,5-bisphosphomevalonate + ADP + H(+). Its pathway is isoprenoid biosynthesis; isopentenyl diphosphate biosynthesis via mevalonate pathway. Its function is as follows. Phosphorylates mevalonate 3-phosphate to form mevalonate 3,5-bisphosphate. Functions in an alternative mevalonate pathway, only present in extreme acidophiles of the Thermoplasmatales order, which passes through mevalonate 3-phosphate rather than mevalonate 5-phosphate. The polypeptide is Mevalonate-3-phosphate 5-kinase (Thermoplasma acidophilum (strain ATCC 25905 / DSM 1728 / JCM 9062 / NBRC 15155 / AMRC-C165)).